We begin with the raw amino-acid sequence, 148 residues long: Oleosin 1 (148 aa).

An N-acetylalanine modification is found at Ala-2. The interval 2–28 is polar; it reads ADQHFQQPLHFQGSYGQQQPRSYQVAK. Residues 29–148 form a hydrophobic region; that stretch reads AATAVTAGGS…HVPSGQQQSS (120 aa). 2 helical membrane passes run 37 to 57 and 81 to 101; these read GSLLVLSGLVLAGTVIALTIA and GFLTSGGFGVAAVTVLSWIYK.

The protein belongs to the oleosin family.

It localises to the lipid droplet. The protein resides in the membrane. In terms of biological role, may have a structural role to stabilize the lipid body during desiccation of the seed by preventing coalescence of the oil. Probably interacts with both lipid and phospholipid moieties of lipid bodies. May also provide recognition signals for specific lipase anchorage in lipolysis during seedling growth. This is Oleosin 1 (OLE1) from Prunus dulcis (Almond).